The sequence spans 67 residues: Large ribosomal subunit protein uL29 (67 aa).

The protein belongs to the universal ribosomal protein uL29 family.

The sequence is that of Large ribosomal subunit protein uL29 from Rhizorhabdus wittichii (strain DSM 6014 / CCUG 31198 / JCM 15750 / NBRC 105917 / EY 4224 / RW1) (Sphingomonas wittichii).